A 308-amino-acid polypeptide reads, in one-letter code: Protoheme IX farnesyltransferase (308 aa).

8 helical membrane passes run 20-40 (LLAYLALTKPRVIELLLVTAI), 50-70 (AIHPLLMLNTLVGGMMAATGA), 102-122 (NALALGLTLTVISFFWLWCAT), 124-144 (LLAGVLALVTVAFYVFVYTLW), 149-169 (TSQNVVWGGAAGCMPVMIGWS), 170-190 (AITGTIAWPALAMFAIIFFWT), 227-249 (LIYTWLTVAATLVLALATSWLYG), and 288-308 (YLAVVFCALAVDSVIALPTLH).

It belongs to the UbiA prenyltransferase family. Protoheme IX farnesyltransferase subfamily.

It is found in the cell membrane. The catalysed reaction is heme b + (2E,6E)-farnesyl diphosphate + H2O = Fe(II)-heme o + diphosphate. Its pathway is porphyrin-containing compound metabolism; heme O biosynthesis; heme O from protoheme: step 1/1. In terms of biological role, converts heme B (protoheme IX) to heme O by substitution of the vinyl group on carbon 2 of heme B porphyrin ring with a hydroxyethyl farnesyl side group. The chain is Protoheme IX farnesyltransferase from Mycobacterium bovis (strain BCG / Pasteur 1173P2).